The primary structure comprises 124 residues: Phosphoribosyl-ATP pyrophosphatase (124 aa).

It belongs to the PRA-PH family.

It localises to the cytoplasm. It catalyses the reaction 1-(5-phospho-beta-D-ribosyl)-ATP + H2O = 1-(5-phospho-beta-D-ribosyl)-5'-AMP + diphosphate + H(+). It participates in amino-acid biosynthesis; L-histidine biosynthesis; L-histidine from 5-phospho-alpha-D-ribose 1-diphosphate: step 2/9. This is Phosphoribosyl-ATP pyrophosphatase from Ralstonia pickettii (strain 12J).